Reading from the N-terminus, the 137-residue chain is Cellular retinoic acid-binding protein 1 (137 aa).

The Nuclear localization signal signature appears at 21–31 (RALGVNAMLRK). 132-134 (RIY) provides a ligand contact to all-trans-retinoate.

This sequence belongs to the calycin superfamily. Fatty-acid binding protein (FABP) family.

The protein resides in the cytoplasm. In terms of biological role, cytosolic CRABPs may regulate the access of retinoic acid to the nuclear retinoic acid receptors. This chain is Cellular retinoic acid-binding protein 1 (CRABP1), found in Pelodiscus sinensis (Chinese softshell turtle).